The chain runs to 368 residues: H-2 class I histocompatibility antigen, K-D alpha chain (368 aa).

The N-terminal stretch at 1 to 21 (MAPCTLLLLLAAALAPTQTRA) is a signal peptide. Positions 22 to 111 (GPHSLRYFVT…AQRYYNQSKG (90 aa)) are alpha-1. Topologically, residues 22–305 (GPHSLRYFVT…KLPPSTVSNT (284 aa)) are extracellular. Asn107 carries N-linked (GlcNAc...) asparagine glycosylation. The tract at residues 112–203 (GSHTFQRMFG…ELGNETLLRT (92 aa)) is alpha-2. Cysteines 122 and 185 form a disulfide. Residues Asn197 and Asn277 are each glycosylated (N-linked (GlcNAc...) asparagine). Positions 204-295 (DSPKAHVTYH…GLPEPLTLRW (92 aa)) are alpha-3. The Ig-like C1-type domain occupies 206–294 (PKAHVTYHPR…KGLPEPLTLR (89 aa)). A disulfide bridge connects residues Cys224 and Cys280. The segment at 296–305 (KLPPSTVSNT) is connecting peptide. The chain crosses the membrane as a helical span at residues 306-328 (VIIAVLVVLGAAIVTGAVVAFVM). Over 329–368 (KMRRNTGGKGVNYALAPGSQTSDLSLPDGKVMVHDPHSLA) the chain is Cytoplasmic. Residues Ser350 and Ser353 each carry the phosphoserine modification.

It belongs to the MHC class I family. As to quaternary structure, heterodimer of an alpha chain and a beta chain (beta-2-microglobulin).

The protein resides in the membrane. Involved in the presentation of foreign antigens to the immune system. In Mus musculus (Mouse), this protein is H-2 class I histocompatibility antigen, K-D alpha chain (H2-K1).